The primary structure comprises 254 residues: 5'-nucleotidase SurE (254 aa).

4 residues coordinate a divalent metal cation: D8, D9, S39, and N91.

Belongs to the SurE nucleotidase family. It depends on a divalent metal cation as a cofactor.

Its subcellular location is the cytoplasm. The enzyme catalyses a ribonucleoside 5'-phosphate + H2O = a ribonucleoside + phosphate. Nucleotidase that shows phosphatase activity on nucleoside 5'-monophosphates. This Methylibium petroleiphilum (strain ATCC BAA-1232 / LMG 22953 / PM1) protein is 5'-nucleotidase SurE.